A 252-amino-acid chain; its full sequence is Adenylate kinase (252 aa).

47 to 52 (GSGKGT) provides a ligand contact to ATP. Residues 67–96 (ATGDMLRSQVKQGTPLGLEAKKIMDQGGLV) are NMP. Residues Thr-68, Arg-73, 94-96 (GLV), 123-126 (GFPR), and Gln-130 each bind AMP. An LID region spans residues 164 to 201 (GRLVHPASGRSYHKIFSPPKKEMTDDITGEPLVQRSDD). ATP-binding positions include Arg-165 and 174-175 (SY). AMP contacts are provided by Arg-198 and Arg-209. Gln-237 provides a ligand contact to ATP.

The protein belongs to the adenylate kinase family. AK2 subfamily. As to quaternary structure, monomer.

The protein localises to the cytoplasm. The protein resides in the cytosol. It is found in the mitochondrion intermembrane space. The enzyme catalyses AMP + ATP = 2 ADP. Its function is as follows. Catalyzes the reversible transfer of the terminal phosphate group between ATP and AMP. Plays an important role in cellular energy homeostasis and in adenine nucleotide metabolism. Adenylate kinase activity is critical for regulation of the phosphate utilization and the AMP de novo biosynthesis pathways. The sequence is that of Adenylate kinase from Lodderomyces elongisporus (strain ATCC 11503 / CBS 2605 / JCM 1781 / NBRC 1676 / NRRL YB-4239) (Yeast).